The sequence spans 420 residues: Anaerobic glycerol-3-phosphate dehydrogenase subunit B (420 aa).

It belongs to the anaerobic G-3-P dehydrogenase subunit B family. In terms of assembly, composed of a catalytic GlpA/B dimer and of membrane bound GlpC. FMN serves as cofactor.

The enzyme catalyses a quinone + sn-glycerol 3-phosphate = dihydroxyacetone phosphate + a quinol. The protein operates within polyol metabolism; glycerol degradation via glycerol kinase pathway; glycerone phosphate from sn-glycerol 3-phosphate (anaerobic route): step 1/1. In terms of biological role, conversion of glycerol 3-phosphate to dihydroxyacetone. Uses fumarate or nitrate as electron acceptor. This is Anaerobic glycerol-3-phosphate dehydrogenase subunit B from Pectobacterium carotovorum subsp. carotovorum (strain PC1).